A 147-amino-acid polypeptide reads, in one-letter code: D-aminoacyl-tRNA deacylase (147 aa).

The short motif at glycine 136–proline 137 is the Gly-cisPro motif, important for rejection of L-amino acids element.

The protein belongs to the DTD family. In terms of assembly, homodimer.

The protein localises to the cytoplasm. The enzyme catalyses glycyl-tRNA(Ala) + H2O = tRNA(Ala) + glycine + H(+). It carries out the reaction a D-aminoacyl-tRNA + H2O = a tRNA + a D-alpha-amino acid + H(+). In terms of biological role, an aminoacyl-tRNA editing enzyme that deacylates mischarged D-aminoacyl-tRNAs. Also deacylates mischarged glycyl-tRNA(Ala), protecting cells against glycine mischarging by AlaRS. Acts via tRNA-based rather than protein-based catalysis; rejects L-amino acids rather than detecting D-amino acids in the active site. By recycling D-aminoacyl-tRNA to D-amino acids and free tRNA molecules, this enzyme counteracts the toxicity associated with the formation of D-aminoacyl-tRNA entities in vivo and helps enforce protein L-homochirality. In Streptococcus suis (strain 98HAH33), this protein is D-aminoacyl-tRNA deacylase.